Consider the following 342-residue polypeptide: Biotin synthase (342 aa).

In terms of domain architecture, Radical SAM core spans 55-274 (NAVQCNQLLN…IALARIMMPK (220 aa)). [4Fe-4S] cluster contacts are provided by Cys70, Cys74, and Cys77. Residues Cys114, Cys145, Cys205, and Arg278 each contribute to the [2Fe-2S] cluster site.

This sequence belongs to the radical SAM superfamily. Biotin synthase family. Homodimer. It depends on [4Fe-4S] cluster as a cofactor. Requires [2Fe-2S] cluster as cofactor.

It catalyses the reaction (4R,5S)-dethiobiotin + (sulfur carrier)-SH + 2 reduced [2Fe-2S]-[ferredoxin] + 2 S-adenosyl-L-methionine = (sulfur carrier)-H + biotin + 2 5'-deoxyadenosine + 2 L-methionine + 2 oxidized [2Fe-2S]-[ferredoxin]. It participates in cofactor biosynthesis; biotin biosynthesis; biotin from 7,8-diaminononanoate: step 2/2. In terms of biological role, catalyzes the conversion of dethiobiotin (DTB) to biotin by the insertion of a sulfur atom into dethiobiotin via a radical-based mechanism. The sequence is that of Biotin synthase from Rhodopseudomonas palustris (strain BisB5).